Consider the following 283-residue polypeptide: MLADMKVRRYIRLLFSYLLLAFMAVIIVYPLLWTAGASFNPGNSLISTSIIPKHPTFDHYKELFAGKESLQYVQWYVNSMKISLFTMAGSLLCVTFTAYAFSRFRFKGRKYALTLFLLLQMIPQFSALIALFVLAQILGMINSHWLLILLYIGGLIPMNTYLMKGYMDSIPMDLDESAKIDGASSTRIFFQIILPLSKPMAAVVAMNGFTGPLGDFVLSSTILRTPESYTLPVGLFNLVNDVMGASYTTFAAGALLISIPVAVIFIMLQKNFVSGLTAGGTKG.

6 consecutive transmembrane segments (helical) span residues 13–33, 82–102, 115–135, 137–157, 188–208, and 248–268; these read LLFS…PLLW, ISLF…YAFS, LFLL…FVLA, ILGM…GLIP, IFFQ…AMNG, and TTFA…FIML. One can recognise an ABC transmembrane type-1 domain in the interval 76-268; it reads YVNSMKISLF…IPVAVIFIML (193 aa).

The protein belongs to the binding-protein-dependent transport system permease family. As to quaternary structure, the complex is composed of two ATP-binding proteins (MsmX), two transmembrane proteins (GanP and GanQ) and a solute-binding protein (GanS).

It localises to the cell membrane. Its function is as follows. Involved in galactan degradation. Part of the ABC transporter complex GanPQS involved in the uptake of galactooligosaccharides. Responsible for the translocation of the substrate across the membrane. This Bacillus subtilis (strain 168) protein is Galactooligosaccharides transport system permease protein GanQ (ganQ).